Consider the following 225-residue polypeptide: Small ribosomal subunit protein uS3 (225 aa).

The 70-residue stretch at 16-85 folds into the KH type-2 domain; the sequence is VYEYLVKETE…TPQIEVKDVK (70 aa). Positions 200-225 are disordered; that stretch reads GENVGTESETDKADEQGREAANTEES. The span at 208-217 shows a compositional bias: basic and acidic residues; it reads ETDKADEQGR.

The protein belongs to the universal ribosomal protein uS3 family. Part of the 30S ribosomal subunit.

Its function is as follows. Binds the lower part of the 30S subunit head. The chain is Small ribosomal subunit protein uS3 from Thermoplasma volcanium (strain ATCC 51530 / DSM 4299 / JCM 9571 / NBRC 15438 / GSS1).